The sequence spans 48 residues: Piguamerin (48 aa).

5 disulfides stabilise this stretch: Cys3/Cys14, Cys8/Cys19, Cys21/Cys41, Cys26/Cys45, and Cys30/Cys47. Positions 19–47 constitute an Antistasin-like domain; that stretch reads CVCVIGQCRKYCPNGFKKDENGCTFPCTC.

This sequence belongs to the protease inhibitor I15 (antistasin) family.

The protein resides in the secreted. Functionally, inhibits plasma and tissue kallikrein, and trypsin. May be involved in leech hematophagia. The polypeptide is Piguamerin (Hirudo nipponia (Korean blood-sucking leech)).